A 926-amino-acid polypeptide reads, in one-letter code: MVSSVLPNPTSAECWAALLHDPMTLDMDAVLSDFVRSTGAEPGLARDLLEGKNWDLTAALSDYEQLRQVHTANLPHVFNEGRGPKQPEREPQPGHKVERPCLQRQDDIAQEKRLSRGISHASSAIVSLARSHVASECNNEQFPLEMPIYTFQLPDLSVYSEDFRSFIERDLIEQATMVALEQAGRLNWWSTVCTSCKRLLPLATTGDGNCLLHAASLGMWGFHDRDLVLRKALYTMMRTGAEREALKRRWRWQQTQQNKEEEWEREWTELLKLASSEPRTHFSKNGGTGGGVDNSEDPVYESLEEFHVFVLAHILRRPIVVVADTMLRDSGGEAFAPIPFGGIYLPLEVPPNRCHCSPLVLAYDQAHFSALVSMEQRDQQREQAVIPLTDSEHKLLPLHFAVDPGKDWEWGKDDNDNARLAHLILSLEAKLNLLHSYMNVTWIRIPSETRAPLAQPESPTASAGEDVQSLADSLDSDRDSVCSNSNSNNGKNGKDKEKEKQRKEKDKTRADSVANKLGSFSKTLGIKLKKNMGGLGGLVHGKMGRANSANGKNGDSAERGKEKKAKSRKGSKEESGASASTSPSEKTTPSPTDKAAGASPAEKGGGPRGDAWKYSTDVKLSLNILRAAMQGERKFIFAGLLLTSHRHQFHEEMIGYYLTSAQERFSAEQEQRRRDAATAAAAAAAAAAATAKRPPRRPETEGVPVPERASPGPPTQLVLKLKERPSPGPAAGRAARAAAGGTASPGGGARRASASGPVPGRSPPAPARQSVIHVQASGARDEACAPAVGALRPCATYPQQNRSLSSQSYSPARAAALRTVNTVESLARAVPGALPGAAGTAGAAEHKSQTYTNGFGALRDGLEFADADAPTARSNGECGRGGPGPVQRRCQRENCAFYGRAETEHYCSYCYREELRRRREARGARP.

The disordered stretch occupies residues 75 to 99; it reads PHVFNEGRGPKQPEREPQPGHKVER. Residues 82–99 are compositionally biased toward basic and acidic residues; it reads RGPKQPEREPQPGHKVER. Serine 119 is modified (phosphoserine). The segment at 168–410 is TRAF-binding; the sequence is ERDLIEQATM…AVDPGKDWEW (243 aa). The segment at 183–449 is catalytic; it reads AGRLNWWSTV…VTWIRIPSET (267 aa). The OTU domain maps to 199–374; sequence LLPLATTGDG…QAHFSALVSM (176 aa). The active site involves aspartate 207. Residue cysteine 210 is the Nucleophile of the active site. Catalysis depends on histidine 367, which acts as the Proton acceptor. Disordered stretches follow at residues 452 to 514, 537 to 613, and 668 to 768; these read PLAQ…DSVA, GLVH…DAWK, and EQEQ…APAR. A compositionally biased stretch (low complexity) spans 481–491; that stretch reads VCSNSNSNNGK. The segment covering 492–510 has biased composition (basic and acidic residues); that stretch reads NGKDKEKEKQRKEKDKTRA. The Nuclear localization signal signature appears at 494 to 509; the sequence is KDKEKEKQRKEKDKTR. Composition is skewed to low complexity over residues 576 to 592, 677 to 691, and 729 to 742; these read GASASTSPSEKTTPSPT, ATAAAAAAAAAAATA, and PAAGRAARAAAGGT. Omega-N-methylarginine is present on arginine 880. The A20-type zinc-finger motif lies at 884–919; it reads GPVQRRCQRENCAFYGRAETEHYCSYCYREELRRRR. Residues cysteine 890, cysteine 895, cysteine 907, and cysteine 910 each contribute to the Zn(2+) site.

The protein belongs to the peptidase C64 family.

It localises to the cytoplasm. The protein localises to the nucleus. The catalysed reaction is Thiol-dependent hydrolysis of ester, thioester, amide, peptide and isopeptide bonds formed by the C-terminal Gly of ubiquitin (a 76-residue protein attached to proteins as an intracellular targeting signal).. Deubiquitinase, which cleaves 'Lys-11'-linked polyubiquitin chains. Might be required for PA28-20S proteasome assembly. The sequence is that of OTU domain-containing protein 7A (OTUD7A) from Homo sapiens (Human).